Reading from the N-terminus, the 469-residue chain is Adenosylhomocysteinase (469 aa).

Positions 63, 139, and 164 each coordinate substrate. 165–167 (TTT) contacts NAD(+). 2 residues coordinate substrate: K194 and D198. NAD(+)-binding positions include N199, 228–233 (GYGDVG), E251, N300, 321–323 (IGH), and N375.

It belongs to the adenosylhomocysteinase family. NAD(+) serves as cofactor.

The protein resides in the cytoplasm. It catalyses the reaction S-adenosyl-L-homocysteine + H2O = L-homocysteine + adenosine. It functions in the pathway amino-acid biosynthesis; L-homocysteine biosynthesis; L-homocysteine from S-adenosyl-L-homocysteine: step 1/1. In terms of biological role, may play a key role in the regulation of the intracellular concentration of adenosylhomocysteine. In Ectopseudomonas mendocina (strain ymp) (Pseudomonas mendocina), this protein is Adenosylhomocysteinase.